The primary structure comprises 219 residues: uncharacterized protein (219 aa).

2 helical membrane passes run 8–28 (MILF…TLSV) and 194–214 (GIPG…GLLF).

The protein resides in the cell membrane. This is an uncharacterized protein from Archaeoglobus fulgidus (strain ATCC 49558 / DSM 4304 / JCM 9628 / NBRC 100126 / VC-16).